A 389-amino-acid chain; its full sequence is 1-acyl-sn-glycerol-3-phosphate acyltransferase 2 (389 aa).

The chain crosses the membrane as a helical span at residues 2–22 (VIAAAVIVPLGLLFFISGLAV). The HXXXXD motif motif lies at 91 to 96 (HRSDID). 2 helical membrane passes run 305 to 325 (LAVVLSWACVLTLGAIKFLHW) and 333 to 353 (KGITISALGLGIITLCMQILI). Positions 357–389 (QSERSTPAKVVPAKPKDNHHPESSSQTETEKEK) are disordered. Basic and acidic residues predominate over residues 370–389 (KPKDNHHPESSSQTETEKEK).

It belongs to the 1-acyl-sn-glycerol-3-phosphate acyltransferase family. As to quaternary structure, interacts with GPAT9 and DGAT1. As to expression, present in roots, leaves, stems, floral buds and siliques (at protein level). Widely expressed. In contrast to LPAT1, it is not expressed at higher level in leaves.

It is found in the endoplasmic reticulum membrane. It carries out the reaction a 1-acyl-sn-glycero-3-phosphate + an acyl-CoA = a 1,2-diacyl-sn-glycero-3-phosphate + CoA. Its pathway is phospholipid metabolism; CDP-diacylglycerol biosynthesis; CDP-diacylglycerol from sn-glycerol 3-phosphate: step 2/3. Its function is as follows. Converts lysophosphatidic acid (LPA) into phosphatidic acid by incorporating acyl moiety at the 2 position. Has preference for C-18-CoA substrates compared to C-16-CoA substrates. Required for female but not male gametophyte development. The polypeptide is 1-acyl-sn-glycerol-3-phosphate acyltransferase 2 (LPAT2) (Arabidopsis thaliana (Mouse-ear cress)).